The primary structure comprises 938 residues: Isoleucine--tRNA ligase (938 aa).

Residues 58 to 68 carry the 'HIGH' region motif; the sequence is PYANGSIHIGH. Residue Lys-183 is modified to N6-acetyllysine. Residue Glu-561 participates in L-isoleucyl-5'-AMP binding. The short motif at 602–606 is the 'KMSKS' region element; that stretch reads KMSKS. Lys-605 contributes to the ATP binding site. Zn(2+) contacts are provided by Cys-901, Cys-904, Cys-921, and Cys-924.

It belongs to the class-I aminoacyl-tRNA synthetase family. IleS type 1 subfamily. As to quaternary structure, monomer. It depends on Zn(2+) as a cofactor.

Its subcellular location is the cytoplasm. The catalysed reaction is tRNA(Ile) + L-isoleucine + ATP = L-isoleucyl-tRNA(Ile) + AMP + diphosphate. Its function is as follows. Catalyzes the attachment of isoleucine to tRNA(Ile). As IleRS can inadvertently accommodate and process structurally similar amino acids such as valine, to avoid such errors it has two additional distinct tRNA(Ile)-dependent editing activities. One activity is designated as 'pretransfer' editing and involves the hydrolysis of activated Val-AMP. The other activity is designated 'posttransfer' editing and involves deacylation of mischarged Val-tRNA(Ile). The chain is Isoleucine--tRNA ligase from Escherichia coli O7:K1 (strain IAI39 / ExPEC).